The sequence spans 423 residues: Dihydroorotase (423 aa).

Zn(2+) is bound by residues H56 and H58. Residues 58–60 and N89 contribute to the substrate site; that span reads HFR. Positions 137, 168, 227, and 302 each coordinate Zn(2+). The residue at position 137 (K137) is an N6-carboxylysine. The active site involves D302. A substrate-binding site is contributed by H306.

The protein belongs to the metallo-dependent hydrolases superfamily. DHOase family. Class I DHOase subfamily. Zn(2+) is required as a cofactor.

It catalyses the reaction (S)-dihydroorotate + H2O = N-carbamoyl-L-aspartate + H(+). Its pathway is pyrimidine metabolism; UMP biosynthesis via de novo pathway; (S)-dihydroorotate from bicarbonate: step 3/3. Catalyzes the reversible cyclization of carbamoyl aspartate to dihydroorotate. This chain is Dihydroorotase, found in Methanocaldococcus jannaschii (strain ATCC 43067 / DSM 2661 / JAL-1 / JCM 10045 / NBRC 100440) (Methanococcus jannaschii).